Here is a 249-residue protein sequence, read N- to C-terminus: DNA polymerase sliding clamp (249 aa).

It belongs to the PCNA family. As to quaternary structure, homotrimer. The subunits circularize to form a toroid; DNA passes through its center. Replication factor C (RFC) is required to load the toroid on the DNA.

Functionally, sliding clamp subunit that acts as a moving platform for DNA processing. Responsible for tethering the catalytic subunit of DNA polymerase and other proteins to DNA during high-speed replication. This chain is DNA polymerase sliding clamp, found in Thermococcus fumicolans.